We begin with the raw amino-acid sequence, 212 residues long: Adenine phosphoribosyltransferase (212 aa).

The protein belongs to the purine/pyrimidine phosphoribosyltransferase family. In terms of assembly, homodimer.

The protein resides in the cytoplasm. It catalyses the reaction AMP + diphosphate = 5-phospho-alpha-D-ribose 1-diphosphate + adenine. It participates in purine metabolism; AMP biosynthesis via salvage pathway; AMP from adenine: step 1/1. In terms of biological role, catalyzes a salvage reaction resulting in the formation of AMP, that is energically less costly than de novo synthesis. The chain is Adenine phosphoribosyltransferase from Mycobacterium tuberculosis (strain ATCC 25618 / H37Rv).